The sequence spans 733 residues: Arginine decarboxylase 1A, chloroplastic (733 aa).

Residues 1–44 (MPALGCCVDAAVSPPPGYSFLWDSSLPAPEIFPSGVPPSTNTAV) constitute a chloroplast transit peptide. Lysine 157 carries the post-translational modification N6-(pyridoxal phosphate)lysine. Pyridoxal 5'-phosphate is bound by residues serine 309, glycine 346, and 395 to 398 (ESGR). 460–461 (YA) is a binding site for substrate. Catalysis depends on cysteine 548, which acts as the Proton donor; shared with dimeric partner. Aspartate 549 contributes to the substrate binding site. A pyridoxal 5'-phosphate-binding site is contributed by tyrosine 592.

This sequence belongs to the Orn/Lys/Arg decarboxylase class-II family. SpeA subfamily. Interacts, via its C-terminal internal region, with the tobacco mosaic virus (TMV) replicase helicase region. Mg(2+) serves as cofactor. It depends on pyridoxal 5'-phosphate as a cofactor.

The protein localises to the plastid. It is found in the chloroplast. The catalysed reaction is L-arginine + H(+) = agmatine + CO2. It functions in the pathway alkaloid biosynthesis; nicotine biosynthesis. Its pathway is amine and polyamine biosynthesis; agmatine biosynthesis; agmatine from L-arginine: step 1/1. Functionally, involved in the biosynthesis of pyridine alkaloid natural products, leading mainly to the production of anabasine, anatabine, nicotine and nornicotine, effective deterrents against herbivores with antiparasitic and pesticide properties (neurotoxins); nornicotine serves as the precursor in the synthesis of the carcinogen compound N'-nitrosonornicotine (NNN). Required for the biosynthesis of putrescine. Catalyzes the first step of polyamine (PA) biosynthesis to produce putrescine from arginine. This Nicotiana tabacum (Common tobacco) protein is Arginine decarboxylase 1A, chloroplastic.